Consider the following 239-residue polypeptide: uncharacterized protein (239 aa).

The next 6 helical transmembrane spans lie at 30–50, 76–96, 107–127, 157–177, 188–208, and 214–234; these read VALL…IELI, LYLG…IFII, LIPI…FGYI, FIIL…FQIL, MMLS…AIIT, and LIQL…ILVL.

This sequence belongs to the TatC family.

The protein resides in the plastid. It is found in the chloroplast membrane. This is an uncharacterized protein from Cyanidium caldarium (Red alga).